The following is a 310-amino-acid chain: Putative HTH-type transcriptional regulatory protein YN1551_1579 (310 aa).

Positions 125–180 constitute an HTH cro/C1-type domain; the sequence is LKHKREEMGYSIGDVAKFLGVSRKAIYDYEKGDSDVSLEVAEKLIDLFGDDIIGDV. The segment at residues 136-155 is a DNA-binding region (H-T-H motif); it reads IGDVAKFLGVSRKAIYDYEK.

The chain is Putative HTH-type transcriptional regulatory protein YN1551_1579 from Saccharolobus islandicus (strain Y.N.15.51 / Yellowstone #2) (Sulfolobus islandicus).